The following is a 237-amino-acid chain: tRNA(His) guanylyltransferase (237 aa).

An N-acetylalanine modification is found at A2. Mg(2+)-binding residues include D29 and G30. GTP contacts are provided by K32, F33, H34, K44, and D47. D77 contributes to the Mg(2+) binding site.

Belongs to the tRNA(His) guanylyltransferase family. Homotetramer. It depends on Mg(2+) as a cofactor.

It carries out the reaction a 5'-end ribonucleotide-tRNA(His) + GTP + ATP + H2O = a 5'-end phospho-guanosine-ribonucleotide-tRNA(His) + AMP + 2 diphosphate + H(+). It catalyses the reaction a 5'-end ribonucleotide-RNA + a ribonucleoside 5'-triphosphate + ATP + H2O = a 5'-end phospho-ribonucleoside-ribonucleotide-RNA + AMP + 2 diphosphate + H(+). Acts as a tRNA(His) guanylyltransferase that catalyzes 3'-5' addition of a single guanosine residue to the -1 position of tRNA(His), to form a non-Watson-Crick G(-1):A-73 base pair. After addition of G(-1), THG1 removes pyrophosphate from the tRNA 5'-end, generating 5'-monophosphorylated G(-1)-containing tRNA which is important for recognition of tRNA(His) by its cognate histidyl-tRNA synthetase. In addition to the single-G(-1) addition reaction, THG1 polymerizes multiple G residues to the 5'-end of tRNA(His) variants using the 3'-end of the tRNA(His) acceptor stem as a template. This is tRNA(His) guanylyltransferase from Saccharomyces cerevisiae (strain ATCC 204508 / S288c) (Baker's yeast).